We begin with the raw amino-acid sequence, 826 residues long: Putative ankyrin repeat protein RBE_0220 (826 aa).

ANK repeat units follow at residues 308 to 337 (LGTS…DQHA), 342 to 371 (IDMS…DPNY), 375 to 404 (DNDT…DPNK), 445 to 474 (NDFT…DVNA), 478 to 507 (DGFT…NPDV), 512 to 541 (TKSS…NPNL), 545 to 574 (DGTT…DINK), and 578 to 607 (NGDN…DLKK).

This is Putative ankyrin repeat protein RBE_0220 from Rickettsia bellii (strain RML369-C).